A 501-amino-acid polypeptide reads, in one-letter code: ATP-dependent rRNA helicase RRP3 (501 aa).

Residues K3–E44 are a coiled coil. A disordered region spans residues E36–S79. A phosphoserine mark is found at S43, S45, and S47. Positions E81 to S109 match the Q motif motif. The 173-residue stretch at I112 to C284 folds into the Helicase ATP-binding domain. A125–T132 serves as a coordination point for ATP. Residues D231–D234 carry the DEAD box motif. The Helicase C-terminal domain maps to L307–V461. The disordered stretch occupies residues I480–R501. The span at M491 to R501 shows a compositional bias: basic and acidic residues.

It belongs to the DEAD box helicase family. DDX47/RRP3 subfamily. Interacts with the SSU processome.

The protein localises to the nucleus. It catalyses the reaction ATP + H2O = ADP + phosphate + H(+). In terms of biological role, ATP-dependent rRNA helicase required for pre-ribosomal RNA processing. Involved in the maturation of the 35S-pre-rRNA and to its cleavage to mature 18S rRNA. This chain is ATP-dependent rRNA helicase RRP3, found in Saccharomyces cerevisiae (strain YJM789) (Baker's yeast).